The sequence spans 211 residues: Small ribosomal subunit protein uS3 (211 aa).

The region spanning 38–106 (LRNFLKKRLY…EVYLNIQEVR (69 aa)) is the KH type-2 domain.

It belongs to the universal ribosomal protein uS3 family. As to quaternary structure, part of the 30S ribosomal subunit. Forms a tight complex with proteins S10 and S14.

Binds the lower part of the 30S subunit head. Binds mRNA in the 70S ribosome, positioning it for translation. This Citrifermentans bemidjiense (strain ATCC BAA-1014 / DSM 16622 / JCM 12645 / Bem) (Geobacter bemidjiensis) protein is Small ribosomal subunit protein uS3.